A 262-amino-acid chain; its full sequence is Glucosamine-6-phosphate deaminase (262 aa).

The Proton acceptor; for enolization step role is filled by Asp-63. Catalysis depends on Asn-129, which acts as the For ring-opening step. His-131 serves as the catalytic Proton acceptor; for ring-opening step. Glu-136 acts as the For ring-opening step in catalysis.

Belongs to the glucosamine/galactosamine-6-phosphate isomerase family. NagB subfamily.

It carries out the reaction alpha-D-glucosamine 6-phosphate + H2O = beta-D-fructose 6-phosphate + NH4(+). It participates in amino-sugar metabolism; N-acetylneuraminate degradation; D-fructose 6-phosphate from N-acetylneuraminate: step 5/5. Its function is as follows. Catalyzes the reversible isomerization-deamination of glucosamine 6-phosphate (GlcN6P) to form fructose 6-phosphate (Fru6P) and ammonium ion. The chain is Glucosamine-6-phosphate deaminase from Bacillus cereus (strain ZK / E33L).